We begin with the raw amino-acid sequence, 105 residues long: Nucleoid-associated protein MXAN_1931 (105 aa).

It belongs to the YbaB/EbfC family. As to quaternary structure, homodimer.

The protein localises to the cytoplasm. The protein resides in the nucleoid. Functionally, binds to DNA and alters its conformation. May be involved in regulation of gene expression, nucleoid organization and DNA protection. The sequence is that of Nucleoid-associated protein MXAN_1931 from Myxococcus xanthus (strain DK1622).